The primary structure comprises 417 residues: Sulfate adenylyltransferase (417 aa).

A compositionally biased stretch (polar residues) spans 1–10; that stretch reads MTSITANQKP. Residues 1–20 form a disordered region; the sequence is MTSITANQKPSKLVPPHGSP.

It belongs to the sulfate adenylyltransferase family.

It carries out the reaction sulfate + ATP + H(+) = adenosine 5'-phosphosulfate + diphosphate. It participates in sulfur metabolism; hydrogen sulfide biosynthesis; sulfite from sulfate: step 1/3. This chain is Sulfate adenylyltransferase, found in Psychrobacter arcticus (strain DSM 17307 / VKM B-2377 / 273-4).